A 142-amino-acid polypeptide reads, in one-letter code: Large ribosomal subunit protein uL16 (142 aa).

The protein belongs to the universal ribosomal protein uL16 family. Part of the 50S ribosomal subunit.

In terms of biological role, binds 23S rRNA and is also seen to make contacts with the A and possibly P site tRNAs. In Mycoplasmopsis pulmonis (strain UAB CTIP) (Mycoplasma pulmonis), this protein is Large ribosomal subunit protein uL16.